Reading from the N-terminus, the 260-residue chain is Flavin-dependent thymidylate synthase (260 aa).

Positions 1–202 (MKIKLVSYSK…PRLFKYAGPN (202 aa)) constitute a ThyX domain. Residues S55, 79 to 81 (RHR), and Q87 each bind FAD. Residues 76–79 (QLVR), 87–91 (QMSHR), and R141 each bind dUMP. Residues 79-89 (RHRIASYTQMS) carry the ThyX motif motif. Residues 157 to 159 (NAR) and N163 contribute to the FAD site. R168 serves as a coordination point for dUMP. Catalysis depends on R168, which acts as the Involved in ionization of N3 of dUMP, leading to its activation.

It belongs to the thymidylate synthase ThyX family. Homotetramer. FAD serves as cofactor.

The catalysed reaction is dUMP + (6R)-5,10-methylene-5,6,7,8-tetrahydrofolate + NADPH + H(+) = dTMP + (6S)-5,6,7,8-tetrahydrofolate + NADP(+). Its pathway is pyrimidine metabolism; dTTP biosynthesis. Its function is as follows. Catalyzes the reductive methylation of 2'-deoxyuridine-5'-monophosphate (dUMP) to 2'-deoxythymidine-5'-monophosphate (dTMP) while utilizing 5,10-methylenetetrahydrofolate (mTHF) as the methyl donor, and NADPH and FADH(2) as the reductant. The polypeptide is Flavin-dependent thymidylate synthase (Sulfolobus acidocaldarius (strain ATCC 33909 / DSM 639 / JCM 8929 / NBRC 15157 / NCIMB 11770)).